The chain runs to 388 residues: Cystathionine gamma-synthase (388 aa).

N6-(pyridoxal phosphate)lysine is present on Lys-208.

This sequence belongs to the trans-sulfuration enzymes family. In terms of assembly, homotetramer. Pyridoxal 5'-phosphate serves as cofactor.

The protein resides in the cytoplasm. The enzyme catalyses O-succinyl-L-homoserine + L-cysteine = L,L-cystathionine + succinate + H(+). Its function is as follows. Catalyzes the formation of L-cystathionine from O-succinyl-L-homoserine (OSHS) and L-cysteine, via a gamma-replacement reaction. In the absence of thiol, catalyzes gamma-elimination to form 2-oxobutanoate, succinate and ammonia. The protein is Cystathionine gamma-synthase (metB) of Mycobacterium leprae (strain TN).